The chain runs to 242 residues: ATP synthase subunit a (242 aa).

6 helical membrane-spanning segments follow: residues 29–49 (SAVAMIFVSIAASLLLIIAFV), 83–103 (VFFPLILTLFLFISLGNIIGM), 114–134 (IIVTFSLAMIVFTTTLVYGIY), 140–160 (FFSLFLPKNIPLWLAPIMVII), 181–201 (VAGHILLKIIAWSIVSLTWFF), and 206–226 (IALVIVLIGFELFISILQAYI).

Belongs to the ATPase A chain family. As to quaternary structure, F-type ATPases have 2 components, CF(1) - the catalytic core - and CF(0) - the membrane proton channel. CF(1) has five subunits: alpha(3), beta(3), gamma(1), delta(1), epsilon(1). CF(0) has three main subunits: a(1), b(2) and c(9-12). The alpha and beta chains form an alternating ring which encloses part of the gamma chain. CF(1) is attached to CF(0) by a central stalk formed by the gamma and epsilon chains, while a peripheral stalk is formed by the delta and b chains.

The protein localises to the cell inner membrane. Functionally, key component of the proton channel; it plays a direct role in the translocation of protons across the membrane. The chain is ATP synthase subunit a from Orientia tsutsugamushi (strain Boryong) (Rickettsia tsutsugamushi).